The following is a 248-amino-acid chain: MTSHPRDTPQFYLTAPSPCPYLPGQEERKVFTHLVGRRARDLNEILTQGGFRRSQTIAYRPACETCRACVSVRVVVEDFAITGSQRRILQRNAELIGTPEPNRPASEQYALFRRYLDARHGDGGMVDMTVLDYAMMIEDSHVDTHLVVYRERGPDSAIHGRGVGAPVAVCLTDVLADGLSMVYSFYDPDEASRSLGTYMILDHIRRARALGLPYLYLGYWVGGSRKMDYKAKFKPQERLMPQGWVRVE.

This sequence belongs to the R-transferase family. Bpt subfamily.

It is found in the cytoplasm. The catalysed reaction is N-terminal L-glutamyl-[protein] + L-leucyl-tRNA(Leu) = N-terminal L-leucyl-L-glutamyl-[protein] + tRNA(Leu) + H(+). It catalyses the reaction N-terminal L-aspartyl-[protein] + L-leucyl-tRNA(Leu) = N-terminal L-leucyl-L-aspartyl-[protein] + tRNA(Leu) + H(+). Functions in the N-end rule pathway of protein degradation where it conjugates Leu from its aminoacyl-tRNA to the N-termini of proteins containing an N-terminal aspartate or glutamate. The sequence is that of Aspartate/glutamate leucyltransferase from Methylorubrum extorquens (strain PA1) (Methylobacterium extorquens).